A 512-amino-acid chain; its full sequence is Gustatory and odorant receptor 63a (512 aa).

The disordered stretch occupies residues 1–24 (MRPSGEKVVKGHGQGNSGHSLSGM). Topologically, residues 1–129 (MRPSGEKVVK…PARAKFEMNS (129 aa)) are cytoplasmic. A helical membrane pass occupies residues 130 to 150 (ASFIYSVVFFVLLACYVGYVA). The Extracellular segment spans residues 151–166 (NNRIHIVRSLSGPFEE). The chain crosses the membrane as a helical span at residues 167 to 187 (AVIAYLFLVNILPIMIIPILW). Residues 188–222 (YEARKIAKLFNDWDDFEVLYYQISGHSLPLKLRQK) lie on the Cytoplasmic side of the membrane. The helical transmembrane segment at 223-243 (AVYIAIVLPILSVLSVVITHV) threads the bilayer. At 244–265 (TMSDLNINQVVPYCILDNLTAM) the chain is on the extracellular side. Asn-261 carries an N-linked (GlcNAc...) asparagine glycan. The chain crosses the membrane as a helical span at residues 266–285 (LGAWWFLICEAMSITAHLLA). Over 286 to 324 (ERFQKALKHIGPAAMVADYRVLWLRLSKLTRDTGNALCY) the chain is Cytoplasmic. A helical membrane pass occupies residues 325 to 345 (TFVFMSLYLFFIITLSIYGLM). Topologically, residues 346-350 (SQLSE) are extracellular. Residues 351-371 (GFGIKDIGLTITALWNIGLLF) traverse the membrane as a helical segment. Residues 372–436 (YICDEAHYAS…FFDVNRTLFK (65 aa)) lie on the Cytoplasmic side of the membrane. The helical transmembrane segment at 437-457 (GLLTTMVTYLVVLLQFQISIP) threads the bilayer. Over 458–512 (TDKGDSEGANNITVVDFVMDSLDNDMSLMGASTLSTTTVGTTLPPPIMKLKGRKG) the chain is Extracellular. Asn-468 carries an N-linked (GlcNAc...) asparagine glycan.

This sequence belongs to the insect chemoreceptor superfamily. Gustatory receptor (GR) family. Gr21a subfamily. In terms of assembly, gr21a and Gr63a probably form a heterodimer that responds to CO(2). As to expression, expressed in the medial aspect of the third antennal segment. Carbon dioxide-responsive neurons coexpress Gr21a and Gr63a in a pair of chemosensory receptors at both larval and adult life stages.

The protein localises to the cell membrane. Functionally, gustatory and odorant receptor which mediates acceptance or avoidance behavior, depending on its substrates. Gr21a and Gr63a together are sufficient for carbon dioxide detection and avoidance behavior. It is possible that the CO(2) receptors Gr63a and Gr21a activate the TRPC channels through Galpha49B and Plc21C. This innate olfactory avoidance behavior can be inhibited by inhibitory interactions of the odors such as 1-hexanol and 2,3-butanedione with Gr21a and Gr63a. The polypeptide is Gustatory and odorant receptor 63a (Gr63a) (Drosophila melanogaster (Fruit fly)).